The sequence spans 1219 residues: Type IV pilus biogenesis factor PilY1 homolog PD_0502 (1219 aa).

Residues 1 to 35 (MVGMSRIILNNLFFFRCVVAVFSAHSLVISGAVHA) form the signal peptide. Residues 212–234 (GLSTDPLNTEGQPYDPSRHPLNS) form a disordered region. Residues glutamine 958, asparagine 960, isoleucine 962, and aspartate 964 each contribute to the Ca(2+) site.

The protein belongs to the PilY1 family.

The protein localises to the fimbrium. One of the three PilY1 homologs of X.fastidiosa, which are involved in bacterial twitching motility as component of the filamentous type IV pili (T4P). The sequence is that of Type IV pilus biogenesis factor PilY1 homolog PD_0502 from Xylella fastidiosa (strain Temecula1 / ATCC 700964).